The following is a 315-amino-acid chain: Trimethylguanosine synthase (315 aa).

Positions 1 to 58 are required for correct nucleolar localization; the sequence is MGRTFIHASKIKHAARKRKHHSNFRTLIKLLNNDAYKIESSKPLKNGKLFKYWKNRRR. S-adenosyl-L-methionine is bound at residue Asp-126. The interval 271 to 315 is disordered; the sequence is TENSRRESSEKEELSSENEELSKRKKHESTTTTKDNTVDIYDVNG. The segment covering 273–284 has biased composition (basic and acidic residues); sequence NSRRESSEKEEL.

Belongs to the methyltransferase superfamily. Trimethylguanosine synthase family. Monomer. Interacts with the spliceosomal snRNP core component SMB1 and the snoRNP components CBF5 and NOP58.

It localises to the nucleus. It is found in the nucleolus. The enzyme catalyses a 5'-end (N(7)-methyl 5'-triphosphoguanosine)-ribonucleoside in snRNA + S-adenosyl-L-methionine = a 5'-end (N(2),N(7)-dimethyl 5'-triphosphoguanosine)-ribonucleoside in snRNA + S-adenosyl-L-homocysteine + H(+). It catalyses the reaction a 5'-end (N(7)-methyl 5'-triphosphoguanosine)-ribonucleoside in snoRNA + S-adenosyl-L-methionine = a 5'-end (N(2),N(7)-dimethyl 5'-triphosphoguanosine)-ribonucleoside in snoRNA + S-adenosyl-L-homocysteine + H(+). It carries out the reaction a 5'-end (N(2),N(7)-dimethyl 5'-triphosphoguanosine)-ribonucleoside in snRNA + S-adenosyl-L-methionine = a 5'-end (N(2),N(2),N(7)-trimethyl 5'-triphosphoguanosine)-ribonucleoside in snRNA + S-adenosyl-L-homocysteine + H(+). The catalysed reaction is a 5'-end (N(2),N(7)-dimethyl 5'-triphosphoguanosine)-ribonucleoside in snoRNA + S-adenosyl-L-methionine = a 5'-end (N(2),N(2),N(7)-trimethyl 5'-triphosphoguanosine)-ribonucleoside in snoRNA + S-adenosyl-L-homocysteine + H(+). With respect to regulation, substrate inhibited by S-adenosyl-L-homocysteine. In terms of biological role, catalyzes the two serial methylation steps for the conversion of the 7-monomethylguanosine (m(7)G) caps of snRNAs and snoRNAs to a 2,2,7-trimethylguanosine (m(2,2,7)G) cap structure. The enzyme is specific for guanine, and N7 methylation must precede N2 methylation. Hypermethylates the m3G cap on TLC1 telomerase which affects telomere silencing and telomere length regulation. Required for pre-mRNA splicing, pre-rRNA processing and small ribosomal subunit synthesis. Involved in nucleolar structural organization. This Saccharomyces cerevisiae (strain ATCC 204508 / S288c) (Baker's yeast) protein is Trimethylguanosine synthase (TGS1).